The primary structure comprises 298 residues: Lipoyl synthase (298 aa).

C40, C45, C51, C67, C71, C74, and S280 together coordinate [4Fe-4S] cluster. Residues 53 to 269 (AVRKTATFMI…KEIALSKGFS (217 aa)) enclose the Radical SAM core domain.

This sequence belongs to the radical SAM superfamily. Lipoyl synthase family. [4Fe-4S] cluster serves as cofactor.

It is found in the cytoplasm. It carries out the reaction [[Fe-S] cluster scaffold protein carrying a second [4Fe-4S](2+) cluster] + N(6)-octanoyl-L-lysyl-[protein] + 2 oxidized [2Fe-2S]-[ferredoxin] + 2 S-adenosyl-L-methionine + 4 H(+) = [[Fe-S] cluster scaffold protein] + N(6)-[(R)-dihydrolipoyl]-L-lysyl-[protein] + 4 Fe(3+) + 2 hydrogen sulfide + 2 5'-deoxyadenosine + 2 L-methionine + 2 reduced [2Fe-2S]-[ferredoxin]. The protein operates within protein modification; protein lipoylation via endogenous pathway; protein N(6)-(lipoyl)lysine from octanoyl-[acyl-carrier-protein]. Its function is as follows. Catalyzes the radical-mediated insertion of two sulfur atoms into the C-6 and C-8 positions of the octanoyl moiety bound to the lipoyl domains of lipoate-dependent enzymes, thereby converting the octanoylated domains into lipoylated derivatives. The chain is Lipoyl synthase from Bacillus cereus (strain B4264).